A 518-amino-acid polypeptide reads, in one-letter code: Integrator complex subunit 14 (518 aa).

One can recognise a VWFA domain in the interval 2–204 (PTVVVMDVSL…KNVQSMFGKL (203 aa)). Residues S10, S12, and T86 each contribute to the Mg(2+) site.

It belongs to the Integrator subunit 14 family. In terms of assembly, component of the Integrator complex, composed of core subunits INTS1, INTS2, INTS3, INTS4, INTS5, INTS6, INTS7, INTS8, INTS9/RC74, INTS10, INTS11/CPSF3L, INTS12, INTS13, INTS14 and INTS15. The core complex associates with protein phosphatase 2A subunits PPP2CA and PPP2R1A, to form the Integrator-PP2A (INTAC) complex. INTS14 is part of the tail subcomplex, composed of INTS10, INTS13, INTS14 and INTS15.

It is found in the nucleus. Its function is as follows. Component of the integrator complex, a multiprotein complex that terminates RNA polymerase II (Pol II) transcription in the promoter-proximal region of genes. The integrator complex provides a quality checkpoint during transcription elongation by driving premature transcription termination of transcripts that are unfavorably configured for transcriptional elongation: the complex terminates transcription by (1) catalyzing dephosphorylation of the C-terminal domain (CTD) of Pol II subunit POLR2A/RPB1 and SUPT5H/SPT5, (2) degrading the exiting nascent RNA transcript via endonuclease activity and (3) promoting the release of Pol II from bound DNA. The integrator complex is also involved in terminating the synthesis of non-coding Pol II transcripts, such as enhancer RNAs (eRNAs), small nuclear RNAs (snRNAs), telomerase RNAs and long non-coding RNAs (lncRNAs). Within the integrator complex, INTS14 is part of the integrator tail module that acts as a platform for the recruitment of transcription factors at promoters. This Xenopus tropicalis (Western clawed frog) protein is Integrator complex subunit 14.